The sequence spans 419 residues: Protein transport protein sec9 (419 aa).

The segment covering 1–11 (MKKLFKKKKGV) has biased composition (basic residues). Disordered regions lie at residues 1–60 (MKKL…TYGS), 116–143 (ARKDMPPMKSSAAVTERPSMHRSAPSQD), and 156–186 (ARIQNDDESTTDTIPHNDDGTEGDEYGEGYR). Residues 21-32 (ESNSNTATNAPS) show a composition bias toward polar residues. A compositionally biased stretch (low complexity) spans 36–60 (GGTTANSYSSNSYNDNNNSNSTYGS). A Phosphoserine modification is found at S141. T-SNARE coiled-coil homology domains are found at residues 203–265 (QFVK…AREL) and 356–418 (DAME…LRHI).

It belongs to the SNAP-25 family.

Functionally, has a role in cell separation, a final step of cytokinesis and in the assembly of the forespore membrane. May have a role in the transport of secretory proteins to these growing sites. The chain is Protein transport protein sec9 (sec9) from Schizosaccharomyces pombe (strain 972 / ATCC 24843) (Fission yeast).